Reading from the N-terminus, the 275-residue chain is 4-deoxy-L-threo-5-hexosulose-uronate ketol-isomerase (275 aa).

Positions 193, 195, 200, and 242 each coordinate Zn(2+).

Belongs to the KduI family. Zn(2+) serves as cofactor.

It carries out the reaction 5-dehydro-4-deoxy-D-glucuronate = 3-deoxy-D-glycero-2,5-hexodiulosonate. It participates in glycan metabolism; pectin degradation; 2-dehydro-3-deoxy-D-gluconate from pectin: step 4/5. Functionally, catalyzes the isomerization of 5-dehydro-4-deoxy-D-glucuronate to 3-deoxy-D-glycero-2,5-hexodiulosonate. The sequence is that of 4-deoxy-L-threo-5-hexosulose-uronate ketol-isomerase from Bacillus licheniformis (strain ATCC 14580 / DSM 13 / JCM 2505 / CCUG 7422 / NBRC 12200 / NCIMB 9375 / NCTC 10341 / NRRL NRS-1264 / Gibson 46).